Consider the following 222-residue polypeptide: Small ribosomal subunit protein eS8z (222 aa).

2 disordered regions span residues 1–37 and 125–147; these read MGISRDSIHKRRATGGKQKQWRKKRKYEMGRQPANTK and KKKSASSTKKDGEEGEEAAVAAP. Residues 8–26 show a composition bias toward basic residues; sequence IHKRRATGGKQKQWRKKRK.

The protein belongs to the eukaryotic ribosomal protein eS8 family.

The sequence is that of Small ribosomal subunit protein eS8z (RPS8A) from Arabidopsis thaliana (Mouse-ear cress).